Consider the following 228-residue polypeptide: Growth arrest-specific protein 1 homolog (228 aa).

The N-terminal stretch at 1 to 17 is a signal peptide; the sequence is MRRVILPLVMTVTLCLA. Residues asparagine 143 and asparagine 156 are each glycosylated (N-linked (GlcNAc...) asparagine). A lipid anchor (GPI-anchor amidated aspartate) is attached at aspartate 205. Positions 206–228 are cleaved as a propeptide — removed in mature form; the sequence is SSVGHGFNILSAISVYLLTVLVF.

As to expression, pharynx muscle cells from its early formation, in the two-fold embryo, until the adult stage.

The protein localises to the cell membrane. Functionally, role in pharynx function or development. The polypeptide is Growth arrest-specific protein 1 homolog (phg-1) (Caenorhabditis elegans).